The sequence spans 308 residues: MTSKSKILFIGGTGYIGKYIVEASARSGHPTLVLVRNSTLTSPSRSSTIENFKNLGVQFLLGDLDDHTSLVNSIKQADVVISTVGHSLLGHQYKIISAIKEAGNVKRFFPSEFGNDVDRVFTVEPAKSAYATKAKIRRTIEAEGIPYTYVSCNFFAGYFLPTLAQPGATSAPRDKVIVLGDGNPKAVFNKEEDIGTYTINAVDDPRTLNKILYIRPPMNTYSFNDLVSLWENKIGKTLERIYVPEEQLLKQIIESSPPLNVMLSLCHCVFVKGGHTSFEIEPSFGVEASELYPDVKYTTVDEILNQYV.

NADP(+) contacts are provided by residues 11–17 (GGTGYIG), Arg-36, and Arg-45. Lys-133 functions as the Proton acceptor in the catalytic mechanism. Arg-137 contacts NADP(+).

This sequence belongs to the NmrA-type oxidoreductase family. Isoflavone reductase subfamily. As to expression, expressed in apical meristem and cotyledon veins of young seedlings. Expressed in vascular tissues of roots, leaves, stems and petals. Expressed in pollen grains. Expressed at low levels in cauline leaves and siliques.

It catalyses the reaction (-)-dehydrodiconiferyl alcohol + NADPH + H(+) = (S)-isodihydrodehydrodiconiferyl alcohol + NADP(+). The catalysed reaction is (+)-dehydrodiconiferyl alcohol + NADPH + H(+) = (R)-isodihydrodehydrodiconiferyl alcohol + NADP(+). The enzyme catalyses (2R,3S)-dihydrodehydrodiconiferyl alcohol + NADPH + H(+) = (S)-tetrahydrodehydrodiconiferyl alcohol + NADP(+). It carries out the reaction (2S,3R)-dihydrodehydrodiconiferyl alcohol + NADPH + H(+) = (R)-tetrahydrodehydrodiconiferyl alcohol + NADP(+). Its function is as follows. Oxidoreductase involved in lignan biosynthesis. Catalyzes the NADPH-dependent reduction of phenylcoumaran benzylic ethers. Converts dehydrodiconiferyl alcohol (DDC) to isodihydrodehydrodiconiferyl alcohol (IDDDC), and dihydrodehydrodiconiferyl alcohol (DDDC) to tetrahydrodehydrodiconiferyl alcohol (TDDC). Plays an important role in the biosynthesis of secondary metabolites. In addition to the 8-5'-linked neolignan DDC, can reduce the 8-8'-linked lignans, pinoresinol, and lariciresinol, but with lower activities. In Arabidopsis thaliana (Mouse-ear cress), this protein is Phenylcoumaran benzylic ether reductase 1.